Reading from the N-terminus, the 475-residue chain is 3-isopropylmalate dehydratase large subunit (475 aa).

Cysteine 353, cysteine 414, and cysteine 417 together coordinate [4Fe-4S] cluster.

The protein belongs to the aconitase/IPM isomerase family. LeuC type 1 subfamily. As to quaternary structure, heterodimer of LeuC and LeuD. The cofactor is [4Fe-4S] cluster.

The enzyme catalyses (2R,3S)-3-isopropylmalate = (2S)-2-isopropylmalate. It functions in the pathway amino-acid biosynthesis; L-leucine biosynthesis; L-leucine from 3-methyl-2-oxobutanoate: step 2/4. Functionally, catalyzes the isomerization between 2-isopropylmalate and 3-isopropylmalate, via the formation of 2-isopropylmaleate. This Stutzerimonas stutzeri (strain A1501) (Pseudomonas stutzeri) protein is 3-isopropylmalate dehydratase large subunit.